We begin with the raw amino-acid sequence, 211 residues long: Guanylate kinase (211 aa).

A Guanylate kinase-like domain is found at 7–185 (GLLIVVTGPS…AVAELRAIIM (179 aa)). 14–21 (GPSAVGKG) contributes to the ATP binding site.

Belongs to the guanylate kinase family.

Its subcellular location is the cytoplasm. The catalysed reaction is GMP + ATP = GDP + ADP. Essential for recycling GMP and indirectly, cGMP. This Symbiobacterium thermophilum (strain DSM 24528 / JCM 14929 / IAM 14863 / T) protein is Guanylate kinase.